The sequence spans 268 residues: Urease accessory protein UreD (268 aa).

Belongs to the UreD family. As to quaternary structure, ureD, UreF and UreG form a complex that acts as a GTP-hydrolysis-dependent molecular chaperone, activating the urease apoprotein by helping to assemble the nickel containing metallocenter of UreC. The UreE protein probably delivers the nickel.

The protein localises to the cytoplasm. Functionally, required for maturation of urease via the functional incorporation of the urease nickel metallocenter. The sequence is that of Urease accessory protein UreD from Lysinibacillus sphaericus (strain C3-41).